The sequence spans 281 residues: MNIVNTIKDVRLIIKKWKDENLSIGYVPTMGYLHEGHASLIKKAREENDKVIVSIFVNPIQFGPKEDYSTYPRDLVKDSSLCEKFGVDLIFNPETSEMYPNKIYSHINVDILTENLCGEKRPGHFQGVCTVLTKFFNILNPTKAYLGEKDAQQLAVVRKMVEDLNFPIEIIGCPIIREEDGLAKSSRNAYLNKQERKSALILNKSLKEAQNALESGEKNSNNIRDIIVSKLNKEPLAKIDYVSIVDSITLQSVKKIQSSILVAIAVYIGKTRLIDNFTFKL.

Residue 30 to 37 (MGYLHEGH) participates in ATP binding. The active-site Proton donor is the histidine 37. Glutamine 61 contacts (R)-pantoate. Residue glutamine 61 participates in beta-alanine binding. An ATP-binding site is contributed by 147 to 150 (GEKD). A (R)-pantoate-binding site is contributed by glutamine 153. Residues isoleucine 176 and 184–187 (KSSR) each bind ATP.

This sequence belongs to the pantothenate synthetase family. In terms of assembly, homodimer.

The protein resides in the cytoplasm. The enzyme catalyses (R)-pantoate + beta-alanine + ATP = (R)-pantothenate + AMP + diphosphate + H(+). It functions in the pathway cofactor biosynthesis; (R)-pantothenate biosynthesis; (R)-pantothenate from (R)-pantoate and beta-alanine: step 1/1. In terms of biological role, catalyzes the condensation of pantoate with beta-alanine in an ATP-dependent reaction via a pantoyl-adenylate intermediate. The polypeptide is Pantothenate synthetase (Clostridium botulinum (strain Langeland / NCTC 10281 / Type F)).